Consider the following 141-residue polypeptide: Nucleoside diphosphate kinase (141 aa).

Lysine 11, phenylalanine 59, arginine 87, threonine 93, arginine 104, and asparagine 114 together coordinate ATP. The active-site Pros-phosphohistidine intermediate is histidine 117.

The protein belongs to the NDK family. In terms of assembly, homotetramer. Mg(2+) is required as a cofactor.

The protein localises to the cytoplasm. The catalysed reaction is a 2'-deoxyribonucleoside 5'-diphosphate + ATP = a 2'-deoxyribonucleoside 5'-triphosphate + ADP. It catalyses the reaction a ribonucleoside 5'-diphosphate + ATP = a ribonucleoside 5'-triphosphate + ADP. In terms of biological role, major role in the synthesis of nucleoside triphosphates other than ATP. The ATP gamma phosphate is transferred to the NDP beta phosphate via a ping-pong mechanism, using a phosphorylated active-site intermediate. The polypeptide is Nucleoside diphosphate kinase (Polaromonas naphthalenivorans (strain CJ2)).